Consider the following 657-residue polypeptide: L-type lectin-domain containing receptor kinase I.8 (657 aa).

An N-terminal signal peptide occupies residues 1–23 (MAPGLDLIWMVISFLLLIHLSSQ). At 24–282 (QETGFSFNGF…QVPHPKMKTS (259 aa)) the chain is on the extracellular side. The tract at residues 25 to 257 (ETGFSFNGFR…NHYILGWSFS (233 aa)) is legume-lectin like. N-linked (GlcNAc...) asparagine glycans are attached at residues Asn-74, Asn-124, Asn-181, Asn-204, and Asn-225. A helical membrane pass occupies residues 283 to 303 (LLLILLLIVLGIILLVLLVGA). Residues 304-657 (YLYRRNKYAE…THSIQYGIGR (354 aa)) are Cytoplasmic-facing. Residues 339 to 611 (FHKDGFLGKG…VQYLDRQVSL (273 aa)) enclose the Protein kinase domain. ATP-binding positions include 345–353 (LGKGGFGEV) and Lys-366. The Proton acceptor role is filled by Asp-462.

The protein in the C-terminal section; belongs to the protein kinase superfamily. Ser/Thr protein kinase family. It in the N-terminal section; belongs to the leguminous lectin family.

It localises to the cell membrane. It carries out the reaction L-seryl-[protein] + ATP = O-phospho-L-seryl-[protein] + ADP + H(+). The enzyme catalyses L-threonyl-[protein] + ATP = O-phospho-L-threonyl-[protein] + ADP + H(+). Functionally, involved in resistance response to the pathogenic fungus Alternaria brassicicola. In Arabidopsis thaliana (Mouse-ear cress), this protein is L-type lectin-domain containing receptor kinase I.8.